The primary structure comprises 754 residues: Protein tyrosine phosphatase domain-containing protein 1 (754 aa).

One can recognise a Tyrosine-protein phosphatase domain in the interval 82–253 (YSSWVTDNIL…LTPLRNIFSC (172 aa)). Cys-190 serves as the catalytic Phosphocysteine intermediate. Residues Ser-392 and Ser-394 each carry the phosphoserine modification. Positions 487–498 (SGAFSADVSGSH) are enriched in polar residues. A disordered region spans residues 487 to 554 (SGAFSADVSG…PRSPLDCGSS (68 aa)). The residue at position 547 (Ser-547) is a Phosphoserine.

It belongs to the protein-tyrosine phosphatase family. Non-receptor class PTPDC1 subfamily.

Its function is as follows. May play roles in cilia formation and/or maintenance. The chain is Protein tyrosine phosphatase domain-containing protein 1 (PTPDC1) from Homo sapiens (Human).